The primary structure comprises 223 residues: Transmembrane protein 235 (223 aa).

The N-terminal stretch at 1–28 (MARLGALLLAAALGALLSFALLAAAVAS) is a signal peptide. N-linked (GlcNAc...) asparagine glycosylation is present at Asn-41. The next 3 helical transmembrane spans lie at 96 to 116 (VIVVLPLSLVLLVCGWICGLL), 126 to 146 (LLFTGCYFLLGSVLTLAGVSI), and 176 to 196 (WSMALAWGSCALEAFSGTLLL).

This sequence belongs to the PMP-22/EMP/MP20 family. N-glycosylated.

Its subcellular location is the membrane. It localises to the endoplasmic reticulum. This is Transmembrane protein 235 (TMEM235) from Homo sapiens (Human).